A 940-amino-acid chain; its full sequence is Pentatricopeptide repeat-containing protein At5g14770, mitochondrial (940 aa).

The N-terminal 24 residues, Met-1–Phe-24, are a transit peptide targeting the mitochondrion. 24 PPR repeats span residues Tyr-59–Pro-93, Asp-94–Pro-129, Asp-130–Ile-161, Asp-162–Pro-196, Asp-197–Thr-231, Asn-241–Pro-259, Asp-260–Pro-294, Asn-295–Val-329, Asp-330–Pro-364, Asn-365–Pro-399, Asn-400–Pro-434, Asn-435–Glu-469, Asn-470–Leu-504, Asp-505–Trp-539, Asp-540–Pro-573, Asp-574–Pro-608, Ser-609–Pro-643, Asn-644–Leu-678, Ser-679–Pro-713, Asp-714–Pro-748, Asn-749–Pro-783, Asp-784–Pro-818, Lys-819–Pro-853, and Asn-854–Lys-891.

The protein belongs to the PPR family. P subfamily.

It is found in the mitochondrion. The chain is Pentatricopeptide repeat-containing protein At5g14770, mitochondrial from Arabidopsis thaliana (Mouse-ear cress).